Reading from the N-terminus, the 434-residue chain is Methylenetetrahydrofolate--tRNA-(uracil-5-)-methyltransferase TrmFO (434 aa).

Residue 10 to 15 participates in FAD binding; it reads GAGLAG.

Belongs to the MnmG family. TrmFO subfamily. FAD serves as cofactor.

It localises to the cytoplasm. It carries out the reaction uridine(54) in tRNA + (6R)-5,10-methylene-5,6,7,8-tetrahydrofolate + NADH + H(+) = 5-methyluridine(54) in tRNA + (6S)-5,6,7,8-tetrahydrofolate + NAD(+). The enzyme catalyses uridine(54) in tRNA + (6R)-5,10-methylene-5,6,7,8-tetrahydrofolate + NADPH + H(+) = 5-methyluridine(54) in tRNA + (6S)-5,6,7,8-tetrahydrofolate + NADP(+). Its function is as follows. Catalyzes the folate-dependent formation of 5-methyl-uridine at position 54 (M-5-U54) in all tRNAs. The chain is Methylenetetrahydrofolate--tRNA-(uracil-5-)-methyltransferase TrmFO from Bacillus cereus (strain G9842).